The sequence spans 493 residues: Ecdysteroid UDP-glucosyltransferase (493 aa).

Positions 1–17 (MIFILLTTLLAVGGAQT) are cleaved as a signal peptide.

This sequence belongs to the UDP-glycosyltransferase family.

Catalyzes the transfer of glucose from UDP-glucose to ecdysteroids which are insect molting hormones. Expression of egt interferes with normal insect development and block molting. The polypeptide is Ecdysteroid UDP-glucosyltransferase (egt) (Choristoneura fumiferana defective polyhedrosis virus (Cfdef)).